The primary structure comprises 150 residues: Large ribosomal subunit protein bL9 (150 aa).

Belongs to the bacterial ribosomal protein bL9 family.

In terms of biological role, binds to the 23S rRNA. In Thioalkalivibrio sulfidiphilus (strain HL-EbGR7), this protein is Large ribosomal subunit protein bL9.